The primary structure comprises 73 residues: Antimicrobial peptide TsAP-1 (73 aa).

The signal sequence occupies residues 1–22; it reads MQIKHLITLFFLVLIVADQCSA. Lys39 carries the lysine amide modification. A propeptide spanning residues 45-73 is cleaved from the precursor; it reads EISAQIEQYKDLQKREAELEELLDRLPMY.

As to expression, expressed by the venom gland.

Its subcellular location is the secreted. Functionally, has a low antimicrobial activity against S.aureus, E.coli, and C.albicans (MICs 120-160 uM). Has a low hemolytic activity (4% at 160 uM). Also inhibits the growth of two cancer cell lines on a total of five (the squamous carcinoma cell line H157 (IC(50)=55.9 uM) and the lung adenocarcinoma cell line H838 (IC(50)=52.5 uM)). This Tityus serrulatus (Brazilian scorpion) protein is Antimicrobial peptide TsAP-1.